We begin with the raw amino-acid sequence, 351 residues long: Inactive RHOMBOID-like protein 8 (351 aa).

7 consecutive transmembrane segments (helical) span residues 48–68 (TWLV…TMGV), 130–150 (WLHS…FVGI), 160–180 (RIAV…VLFV), 183–203 (IPSI…LSAL), 216–236 (ALAI…LPFI), 239–259 (FANI…LFKP), and 294–314 (IICL…ACWG).

The protein belongs to the peptidase S54 family. Expressed in pollen mother cell.

The protein resides in the golgi apparatus membrane. Probable inactive rhomboid-type serine protease. In terms of biological role, probably essential for the meiosis stage-specific callose accumulation and pollen exine formation. The chain is Inactive RHOMBOID-like protein 8 from Arabidopsis thaliana (Mouse-ear cress).